The following is a 437-amino-acid chain: Phenylacetate-coenzyme A ligase (437 aa).

It belongs to the phenylacetyl-CoA ligase family. Monomer.

The enzyme catalyses 2-phenylacetate + ATP + CoA = phenylacetyl-CoA + AMP + diphosphate. It functions in the pathway aromatic compound metabolism; phenylacetate degradation. Its function is as follows. Catalyzes the activation of phenylacetic acid (PA) to phenylacetyl-CoA (PA-CoA). This chain is Phenylacetate-coenzyme A ligase (paaK), found in Escherichia coli (strain K12).